The following is a 402-amino-acid chain: 3-dehydroquinate synthase (402 aa).

Belongs to the archaeal-type DHQ synthase family.

It catalyses the reaction 2-amino-2,3,7-trideoxy-D-lyxo-hept-6-ulosonate + NAD(+) + H2O = 3-dehydroquinate + NH4(+) + NADH + H(+). Functionally, catalyzes the oxidative deamination and cyclization of 2-amino-3,7-dideoxy-D-threo-hept-6-ulosonic acid (ADH) to yield 3-dehydroquinate (DHQ), which is fed into the canonical shikimic pathway of aromatic amino acid biosynthesis. This is 3-dehydroquinate synthase from Methanopyrus kandleri (strain AV19 / DSM 6324 / JCM 9639 / NBRC 100938).